Here is a 151-residue protein sequence, read N- to C-terminus: Ribosome maturation factor RimP (151 aa).

It belongs to the RimP family.

It is found in the cytoplasm. Its function is as follows. Required for maturation of 30S ribosomal subunits. The polypeptide is Ribosome maturation factor RimP (Caldanaerobacter subterraneus subsp. tengcongensis (strain DSM 15242 / JCM 11007 / NBRC 100824 / MB4) (Thermoanaerobacter tengcongensis)).